Consider the following 540-residue polypeptide: Sterol 14-alpha demethylase (540 aa).

Residues 41-61 traverse the membrane as a helical segment; that stretch reads PLFLVSGFLGVCVAYAVANII. Residue C485 coordinates heme.

This sequence belongs to the cytochrome P450 family. Heme serves as cofactor.

The protein localises to the membrane. The catalysed reaction is a 14alpha-methyl steroid + 3 reduced [NADPH--hemoprotein reductase] + 3 O2 = a Delta(14) steroid + formate + 3 oxidized [NADPH--hemoprotein reductase] + 4 H2O + 4 H(+). It carries out the reaction a 14alpha-methyl steroid + reduced [NADPH--hemoprotein reductase] + O2 = a 14alpha-hydroxymethyl steroid + oxidized [NADPH--hemoprotein reductase] + H2O + H(+). The enzyme catalyses a 14alpha-hydroxymethyl steroid + reduced [NADPH--hemoprotein reductase] + O2 = a 14alpha-formyl steroid + oxidized [NADPH--hemoprotein reductase] + 2 H2O + H(+). It catalyses the reaction a 14alpha-formyl steroid + reduced [NADPH--hemoprotein reductase] + O2 = a Delta(14) steroid + formate + oxidized [NADPH--hemoprotein reductase] + H2O + 2 H(+). The catalysed reaction is lanosterol + 3 reduced [NADPH--hemoprotein reductase] + 3 O2 = 4,4-dimethyl-5alpha-cholesta-8,14,24-trien-3beta-ol + formate + 3 oxidized [NADPH--hemoprotein reductase] + 4 H2O + 4 H(+). It carries out the reaction lanosterol + reduced [NADPH--hemoprotein reductase] + O2 = 32-hydroxylanosterol + oxidized [NADPH--hemoprotein reductase] + H2O + H(+). The enzyme catalyses 32-hydroxylanosterol + reduced [NADPH--hemoprotein reductase] + O2 = 32-oxolanosterol + oxidized [NADPH--hemoprotein reductase] + 2 H2O + H(+). It catalyses the reaction 32-oxolanosterol + reduced [NADPH--hemoprotein reductase] + O2 = 4,4-dimethyl-5alpha-cholesta-8,14,24-trien-3beta-ol + formate + oxidized [NADPH--hemoprotein reductase] + H2O + 2 H(+). The catalysed reaction is eburicol + 3 reduced [NADPH--hemoprotein reductase] + 3 O2 = 14-demethyleburicol + formate + 3 oxidized [NADPH--hemoprotein reductase] + 4 H2O + 4 H(+). It carries out the reaction eburicol + reduced [NADPH--hemoprotein reductase] + O2 = 32-hydroxyeburicol + oxidized [NADPH--hemoprotein reductase] + H2O + H(+). The enzyme catalyses 32-hydroxyeburicol + reduced [NADPH--hemoprotein reductase] + O2 = 32-oxoeburicol + oxidized [NADPH--hemoprotein reductase] + 2 H2O + H(+). It catalyses the reaction 32-oxoeburicol + reduced [NADPH--hemoprotein reductase] + O2 = 14-demethyleburicol + formate + oxidized [NADPH--hemoprotein reductase] + H2O + 2 H(+). It participates in steroid biosynthesis; sterol biosynthesis. Sterol 14-alpha demethylase; part of the gene cluster that mediates the biosynthesis of tetrahydropyranyl antifungal agent lanomycin that acts as an inhibitor of CYP51 and blocks the ergosterol biosynthesis. Sterol 14-alpha-demethylase plays a critical role in the biosynthesis of ergosterol, the major sterol component in fungal membranes that participates in a variety of functions. Acts as a self-resistant CYP51 that contains mutations found in CYP51s isolated from azole resistance strains and that is not inhibited by the final product of the cluster, lanomycin. This Pyrenophora dematioidea (Helminthosporium dematioideum) protein is Sterol 14-alpha demethylase.